Reading from the N-terminus, the 241-residue chain is Ribosome assembly factor mrt4 (241 aa).

This sequence belongs to the universal ribosomal protein uL10 family. As to quaternary structure, associates with the pre-60S ribosomal particle.

The protein localises to the nucleus. Its subcellular location is the nucleolus. It is found in the cytoplasm. Functionally, component of the ribosome assembly machinery. Nuclear paralog of the ribosomal protein P0, it binds pre-60S subunits at an early stage of assembly in the nucleolus, and is replaced by P0 in cytoplasmic pre-60S subunits and mature 80S ribosomes. In Schizosaccharomyces pombe (strain 972 / ATCC 24843) (Fission yeast), this protein is Ribosome assembly factor mrt4.